The following is a 1081-amino-acid chain: Mediator of RNA polymerase II transcription subunit 15 (1081 aa).

S2 carries the post-translational modification N-acetylserine. The tract at residues 25 to 49 is interaction with GCN4; it reads LQVLMDINTLNGGSSDTADKIRIHA. The segment at 238 to 286 is disordered; sequence QAQAQANNNNNGLPQNGNINNNINIPQQQQMQPPNSSANNNPLQQQSSQ. Phosphoserine is present on S335. 11 repeat units span residues 422-423, 424-425, 426-427, 428-429, 430-431, 432-433, 434-435, 436-437, 438-439, 440-441, and 442-443. The 30 X 2 AA approximate tandem repeats of Q-A stretch occupies residues 422–481; sequence QAQAQAQAQAQAQAQAQAQAQAAQAAQAQAQAQAQAQAQAQAQAQAQAQAQAQAQAQAQA. The 12; approximate repeat unit spans residues 444 to 445; it reads AQ. Residues 446 to 447 form a 13; approximate repeat; it reads AA. Repeat copies occupy residues 448 to 449, 450 to 451, 452 to 453, 454 to 455, 456 to 457, 458 to 459, 460 to 461, 462 to 463, 464 to 465, 466 to 467, 468 to 469, 470 to 471, 472 to 473, 474 to 475, 476 to 477, 478 to 479, and 480 to 481. The segment covering 476 to 497 has biased composition (low complexity); the sequence is QAQAQAHAQHQPSQQPQQAQQQ. Disordered regions lie at residues 476 to 505 and 692 to 712; these read QAQA…HGLT and QQQQ…YSAM. Residues S736, S752, S783, S785, and S789 each carry the phosphoserine modification. The disordered stretch occupies residues 744-836; it reads PVSAAATPSL…KTVQSPMGAQ (93 aa). Residues 749-836 are compositionally biased toward polar residues; it reads ATPSLNKTIN…KTVQSPMGAQ (88 aa). The residue at position 793 (T793) is a Phosphothreonine. A phosphoserine mark is found at S831, S1003, S1008, S1018, and S1034. The segment at 1026-1055 is disordered; that stretch reads DSKKIKVDSPDDPFMTKSGATTSEKQEVTN.

It belongs to the Mediator complex subunit 15 family. In terms of assembly, component of the Mediator complex, which is composed of at least 21 subunits that form three structurally distinct submodules. The Mediator head module contains MED6, MED8, MED11, SRB4/MED17, SRB5/MED18, ROX3/MED19, SRB2/MED20 and SRB6/MED22, the middle module contains MED1, MED4, NUT1/MED5, MED7, CSE2/MED9, NUT2/MED10, SRB7/MED21 and SOH1/MED31, and the tail module contains MED2, PGD1/MED3, RGR1/MED14, GAL11/MED15 and SIN4/MED16. The head and the middle modules interact directly with RNA polymerase II, whereas the elongated tail module interacts with gene-specific regulatory proteins. GAL11/MED15 interacts with the activator GAL4; the interaction is direct. GAL11/MED15 interacts (via multiple regions) with the activator GCN4; the interaction is direct.

It is found in the nucleus. Its function is as follows. Component of the Mediator complex, a coactivator involved in the regulated transcription of nearly all RNA polymerase II-dependent genes. Mediator functions as a bridge to convey information from gene-specific regulatory proteins to the basal RNA polymerase II transcription machinery. The Mediator complex, having a compact conformation in its free form, is recruited to promoters by direct interactions with regulatory proteins and serves for the assembly of a functional pre-initiation complex with RNA polymerase II and the general transcription factors. The Mediator complex unfolds to an extended conformation and partially surrounds RNA polymerase II, specifically interacting with the unphosphorylated form of the C-terminal domain (CTD) of RNA polymerase II. The Mediator complex dissociates from the RNA polymerase II holoenzyme and stays at the promoter when transcriptional elongation begins. It has an important role in the negative regulation of Ty transcription. This is Mediator of RNA polymerase II transcription subunit 15 from Saccharomyces cerevisiae (strain ATCC 204508 / S288c) (Baker's yeast).